A 78-amino-acid chain; its full sequence is Acyl carrier protein (78 aa).

Positions 1-76 (MSLEDDVKLI…DVITYIKTRQ (76 aa)) constitute a Carrier domain. O-(pantetheine 4'-phosphoryl)serine is present on serine 36.

The protein belongs to the acyl carrier protein (ACP) family. 4'-phosphopantetheine is transferred from CoA to a specific serine of apo-ACP by AcpS. This modification is essential for activity because fatty acids are bound in thioester linkage to the sulfhydryl of the prosthetic group.

Its subcellular location is the cytoplasm. The protein operates within lipid metabolism; fatty acid biosynthesis. In terms of biological role, carrier of the growing fatty acid chain in fatty acid biosynthesis. The sequence is that of Acyl carrier protein from Chlamydia felis (strain Fe/C-56) (Chlamydophila felis).